Reading from the N-terminus, the 458-residue chain is UPF0210 protein Mevan_0738 (458 aa).

This sequence belongs to the UPF0210 family.

The protein is UPF0210 protein Mevan_0738 of Methanococcus vannielii (strain ATCC 35089 / DSM 1224 / JCM 13029 / OCM 148 / SB).